We begin with the raw amino-acid sequence, 311 residues long: Olfactory receptor 10G4 (311 aa).

Residues 1–23 (MSNASLVTAFILTGLPHAPGLDA) lie on the Extracellular side of the membrane. The N-linked (GlcNAc...) asparagine glycan is linked to Asn3. A helical transmembrane segment spans residues 24-44 (LLFGIFLVVYVLTVLGNLLIL). Residues 45–52 (LVIRVDSH) lie on the Cytoplasmic side of the membrane. A helical membrane pass occupies residues 53-73 (LHTPMYYFLTNLSFIDMWFST). At 74–98 (VTVPKMLMTLVSPSGRAISFHSCVA) the chain is on the extracellular side. Cysteines 96 and 188 form a disulfide. The helical transmembrane segment at 99–119 (QLYFFHFLGSTECFLYTVMSY) threads the bilayer. Topologically, residues 120 to 138 (DRYLAISYPLRYTSMMSGS) are cytoplasmic. The helical transmembrane segment at 139-159 (RCALLATGTWLSGSLHSAVQT) threads the bilayer. Topologically, residues 160 to 196 (ILTFHLPYCGPNQIQHYFCDAPPILKLACADTSANVM) are extracellular. The chain crosses the membrane as a helical span at residues 197-216 (VIFVDIGIVASGCFVLIVLS). Residues 217 to 236 (YVSIVCSILRIRTSDGRRRA) are Cytoplasmic-facing. A helical membrane pass occupies residues 237 to 257 (FQTCASHCIVVLCFFVPCVVI). Residues 258 to 268 (YLRPGSMDAMD) are Extracellular-facing. The helical transmembrane segment at 269–289 (GVVAIFYTVLTPLLNPVVYTL) threads the bilayer. The Cytoplasmic segment spans residues 290–311 (RNKEVKKAVLKLRDKVAHPQRK).

It belongs to the G-protein coupled receptor 1 family.

The protein localises to the cell membrane. Odorant receptor. The chain is Olfactory receptor 10G4 (OR10G4) from Homo sapiens (Human).